The primary structure comprises 380 residues: MSSKWFNAIHLLVCPLTVLVGYLMNAYGYGAALQATLNKDGLVNAMLVKKGWFWTSLVGWWCIIRYRAVPGATGRDRRHIVQSFKRYAILTVWWYVFTQGIWFGVGPIMDLVFVYTGGHCHYDVFDDAGHVNEDFQGSVTRTNRALALIHNVLTLHGHHQEHRQQQLWDRSIGSIQGALQATQPKTPKNVTASAAAAINTFIHDQMHRWQGPLTTSAQCRRFGGHWAGGHDPSGHVFLATLMCMFLLGELRVFGRRALAHLYAQKWQLVRLVTRLFDTGPLWTWRRCGGGSMTCGARLWRAIVEPPVTCAAALLRLTRCIACDHPVIILLTLLVTWLWQLLLTAVASRFHTVREHMSGLLAAYIVTGLVYARDAAALRPV.

Over 1-7 (MSSKWFN) the chain is Cytoplasmic. A helical membrane pass occupies residues 8–28 (AIHLLVCPLTVLVGYLMNAYG). The Lumenal segment spans residues 29-43 (YGAALQATLNKDGLV). A helical transmembrane segment spans residues 44–64 (NAMLVKKGWFWTSLVGWWCII). The Cytoplasmic portion of the chain corresponds to 65–88 (RYRAVPGATGRDRRHIVQSFKRYA). The chain crosses the membrane as a helical span at residues 89-109 (ILTVWWYVFTQGIWFGVGPIM). At 110–233 (DLVFVYTGGH…GHWAGGHDPS (124 aa)) the chain is on the lumenal side. Residues 234-254 (GHVFLATLMCMFLLGELRVFG) traverse the membrane as a helical segment. Histidine 235 is a catalytic residue. Topologically, residues 255 to 325 (RRALAHLYAQ…LTRCIACDHP (71 aa)) are cytoplasmic. Residues 326–346 (VIILLTLLVTWLWQLLLTAVA) traverse the membrane as a helical segment. The Lumenal portion of the chain corresponds to 347-356 (SRFHTVREHM). Histidine 350 is an active-site residue. The chain crosses the membrane as a helical span at residues 357–377 (SGLLAAYIVTGLVYARDAAAL). Residues 378 to 380 (RPV) lie on the Cytoplasmic side of the membrane.

The protein belongs to the FIT family. Fungal FIT2B/SCS3 subfamily.

Its subcellular location is the endoplasmic reticulum membrane. It catalyses the reaction an acyl-CoA + H2O = an acyl-4'-phosphopantetheine + adenosine 3',5'-bisphosphate + 2 H(+). The enzyme catalyses (9Z)-octadecenoyl-CoA + H2O = S-(9Z-octadecenoyl)-4'-phosphopantetheine + adenosine 3',5'-bisphosphate + 2 H(+). The catalysed reaction is (5Z,8Z,11Z,14Z)-eicosatetraenoyl-CoA + H2O = S-(5Z,8Z,11Z,14Z-eicosatetraenoyl)-4'-phosphopantetheine + adenosine 3',5'-bisphosphate + 2 H(+). It carries out the reaction hexadecanoyl-CoA + H2O = S-hexadecanoyl-4'-phosphopantetheine + adenosine 3',5'-bisphosphate + 2 H(+). Functionally, fatty acyl-coenzyme A (CoA) diphosphatase that hydrolyzes fatty acyl-CoA to yield acyl-4'-phosphopantetheine and adenosine 3',5'-bisphosphate. Preferentially hydrolyzes unsaturated long-chain acyl-CoA substrates in the endoplasmic reticulum (ER) lumen. This catalytic activity is required for maintaining ER structure and for lipid droplets (LDs) biogenesis, which are lipid storage organelles involved in maintaining lipid and energy homeostasis. May directly bind to diacylglycerol (DAGs) and triacylglycerol, which is also important for LD biogenesis. May support directional budding of nacent LDs from the ER into the cytosol by reducing DAG levels at sites of LD formation. May play a role in the regulation of cell morphology and cytoskeletal organization. Involved in phospholipid biosynthesis. The protein is Acyl-coenzyme A diphosphatase SCS3 of Saccharomyces cerevisiae (strain ATCC 204508 / S288c) (Baker's yeast).